The following is a 331-amino-acid chain: Ribose operon repressor (331 aa).

The region spanning 1 to 56 (MTTIRDVAKHAKVSVATVSRVLNKKGYVSKEAEEAVLQAIKELNYQPSSVARSLYH) is the HTH lacI-type domain. Residues 4–23 (IRDVAKHAKVSVATVSRVLN) constitute a DNA-binding region (H-T-H motif).

Functionally, transcriptional repressor for the ribose rbsDACBK operon. This chain is Ribose operon repressor (rbsR), found in Halalkalibacterium halodurans (strain ATCC BAA-125 / DSM 18197 / FERM 7344 / JCM 9153 / C-125) (Bacillus halodurans).